Here is a 161-residue protein sequence, read N- to C-terminus: Endoribonuclease YbeY (161 aa).

Zn(2+) is bound by residues histidine 121, histidine 125, and histidine 131.

The protein belongs to the endoribonuclease YbeY family. Zn(2+) is required as a cofactor.

The protein localises to the cytoplasm. Single strand-specific metallo-endoribonuclease involved in late-stage 70S ribosome quality control and in maturation of the 3' terminus of the 16S rRNA. The chain is Endoribonuclease YbeY from Xanthomonas axonopodis pv. citri (strain 306).